The following is a 1302-amino-acid chain: DNA-directed RNA polymerase subunit beta (1302 aa).

This sequence belongs to the RNA polymerase beta chain family. The RNAP catalytic core consists of 2 alpha, 1 beta, 1 beta' and 1 omega subunit. When a sigma factor is associated with the core the holoenzyme is formed, which can initiate transcription.

It carries out the reaction RNA(n) + a ribonucleoside 5'-triphosphate = RNA(n+1) + diphosphate. Its function is as follows. DNA-dependent RNA polymerase catalyzes the transcription of DNA into RNA using the four ribonucleoside triphosphates as substrates. The sequence is that of DNA-directed RNA polymerase subunit beta from Spiroplasma citri.